The chain runs to 478 residues: Alpha-1,3-mannosyl-glycoprotein 4-beta-N-acetylglucosaminyltransferase C (478 aa).

Residues 1 to 25 (MLKFYQMKYIFQILDKMRCLRKRST) are Cytoplasmic-facing. Residues 26–43 (VSFLGVLVVFLLFMNLYI) traverse the membrane as a helical; Signal-anchor for type II membrane protein segment. Residues 44–478 (EDSYVLEGDK…IIRSISIWTS (435 aa)) are Lumenal-facing. 2 N-linked (GlcNAc...) asparagine glycosylation sites follow: asparagine 84 and asparagine 215.

The protein belongs to the glycosyltransferase 54 family. Requires a divalent metal cation as cofactor.

It is found in the golgi apparatus membrane. The enzyme catalyses N(4)-{beta-D-GlcNAc-(1-&gt;2)-alpha-D-Man-(1-&gt;3)-[beta-D-GlcNAc-(1-&gt;2)-alpha-D-Man-(1-&gt;6)]-beta-D-Man-(1-&gt;4)-beta-D-GlcNAc-(1-&gt;4)-beta-D-GlcNAc}-L-asparaginyl-[protein] + UDP-N-acetyl-alpha-D-glucosamine = N(4)-{beta-D-GlcNAc-(1-&gt;2)-[beta-D-GlcNAc-(1-&gt;4)]-alpha-D-Man-(1-&gt;3)-[beta-D-GlcNAc-(1-&gt;2)-alpha-D-Man-(1-&gt;6)]-beta-D-Man-(1-&gt;4)-beta-D-GlcNAc-(1-&gt;4)-beta-D-GlcNAc}-L-asparaginyl-[protein] + UDP + H(+). Its pathway is protein modification; protein glycosylation. Its function is as follows. Glycosyltransferase that participates in the transfer of N-acetylglucosamine (GlcNAc) to the core mannose residues of N-linked glycans. Catalyzes the formation of the GlcNAcbeta1-4 branch on the GlcNAcbeta1-2Manalpha1-3 arm of the core structure of N-linked glycans. Essential for the production of tri- and tetra-antennary N-linked sugar chains. Does not catalyze the transfer of GlcNAc to the Manalpha1-6 arm to form GlcNAcBeta1-4Manalpha1-6 linkage ('GnT-VI' activity). This is Alpha-1,3-mannosyl-glycoprotein 4-beta-N-acetylglucosaminyltransferase C (Mgat4c) from Mus musculus (Mouse).